The chain runs to 491 residues: Putative F-box/LRR-repeat protein At3g59230 (491 aa).

An F-box domain is found at 11–57 (KDIINSLPEALIYHILSFLSTKEAAITSLLSRKWRYFFAFVPNLDFD). LRR repeat units follow at residues 127 to 154 (LSIA…RIEA), 156 to 182 (NGLA…YLDS), 184 to 209 (ELDY…VMID), 325 to 351 (ASTV…TIES), 352 to 377 (NTKV…VFQG), 419 to 444 (NDKT…NIYY), and 472 to 491 (VQVI…SSSI).

The protein is Putative F-box/LRR-repeat protein At3g59230 of Arabidopsis thaliana (Mouse-ear cress).